A 347-amino-acid polypeptide reads, in one-letter code: Isopentenyl-diphosphate delta-isomerase (347 aa).

9–10 (RK) lines the substrate pocket. Residues S67, 68–70 (SMT), S98, and N127 contribute to the FMN site. Substrate is bound at residue 98 to 100 (SQR). Q162 contributes to the substrate binding site. E163 serves as a coordination point for Mg(2+). Residues K194, T224, 274–276 (GIK), and 295–296 (AA) contribute to the FMN site.

It belongs to the IPP isomerase type 2 family. Homooctamer. Dimer of tetramers. It depends on FMN as a cofactor. NADPH serves as cofactor. Mg(2+) is required as a cofactor.

It localises to the cytoplasm. The enzyme catalyses isopentenyl diphosphate = dimethylallyl diphosphate. Involved in the biosynthesis of isoprenoids. Catalyzes the 1,3-allylic rearrangement of the homoallylic substrate isopentenyl (IPP) to its allylic isomer, dimethylallyl diphosphate (DMAPP). The protein is Isopentenyl-diphosphate delta-isomerase of Pseudescherichia vulneris (Escherichia vulneris).